The chain runs to 262 residues: Acyl-[acyl-carrier-protein]--UDP-N-acetylglucosamine O-acyltransferase (262 aa).

Belongs to the transferase hexapeptide repeat family. LpxA subfamily. In terms of assembly, homotrimer.

Its subcellular location is the cytoplasm. It carries out the reaction a (3R)-hydroxyacyl-[ACP] + UDP-N-acetyl-alpha-D-glucosamine = a UDP-3-O-[(3R)-3-hydroxyacyl]-N-acetyl-alpha-D-glucosamine + holo-[ACP]. Its pathway is glycolipid biosynthesis; lipid IV(A) biosynthesis; lipid IV(A) from (3R)-3-hydroxytetradecanoyl-[acyl-carrier-protein] and UDP-N-acetyl-alpha-D-glucosamine: step 1/6. In terms of biological role, involved in the biosynthesis of lipid A, a phosphorylated glycolipid that anchors the lipopolysaccharide to the outer membrane of the cell. This is Acyl-[acyl-carrier-protein]--UDP-N-acetylglucosamine O-acyltransferase from Escherichia coli O157:H7.